Consider the following 319-residue polypeptide: Aspartate carbamoyltransferase catalytic subunit (319 aa).

Residues Arg-65 and Thr-66 each coordinate carbamoyl phosphate. Lys-93 is a binding site for L-aspartate. The carbamoyl phosphate site is built by Arg-115, His-149, and Gln-152. L-aspartate is bound by residues Arg-182 and Arg-237. The carbamoyl phosphate site is built by Gly-278 and Pro-279.

It belongs to the aspartate/ornithine carbamoyltransferase superfamily. ATCase family. As to quaternary structure, heterododecamer (2C3:3R2) of six catalytic PyrB chains organized as two trimers (C3), and six regulatory PyrI chains organized as three dimers (R2).

It carries out the reaction carbamoyl phosphate + L-aspartate = N-carbamoyl-L-aspartate + phosphate + H(+). It functions in the pathway pyrimidine metabolism; UMP biosynthesis via de novo pathway; (S)-dihydroorotate from bicarbonate: step 2/3. Functionally, catalyzes the condensation of carbamoyl phosphate and aspartate to form carbamoyl aspartate and inorganic phosphate, the committed step in the de novo pyrimidine nucleotide biosynthesis pathway. The protein is Aspartate carbamoyltransferase catalytic subunit of Janthinobacterium sp. (strain Marseille) (Minibacterium massiliensis).